The following is a 462-amino-acid chain: ATP synthase subunit beta (462 aa).

152-159 (GGAGVGKT) is a binding site for ATP.

The protein belongs to the ATPase alpha/beta chains family. F-type ATPases have 2 components, CF(1) - the catalytic core - and CF(0) - the membrane proton channel. CF(1) has five subunits: alpha(3), beta(3), gamma(1), delta(1), epsilon(1). CF(0) has three main subunits: a(1), b(2) and c(9-12). The alpha and beta chains form an alternating ring which encloses part of the gamma chain. CF(1) is attached to CF(0) by a central stalk formed by the gamma and epsilon chains, while a peripheral stalk is formed by the delta and b chains.

It is found in the cell inner membrane. The enzyme catalyses ATP + H2O + 4 H(+)(in) = ADP + phosphate + 5 H(+)(out). Functionally, produces ATP from ADP in the presence of a proton gradient across the membrane. The catalytic sites are hosted primarily by the beta subunits. This Aeromonas hydrophila subsp. hydrophila (strain ATCC 7966 / DSM 30187 / BCRC 13018 / CCUG 14551 / JCM 1027 / KCTC 2358 / NCIMB 9240 / NCTC 8049) protein is ATP synthase subunit beta.